The chain runs to 464 residues: MEKKESLDSSLKEIVSVCKRRGFVYPGSEIYGGLSNTFDYGPYGVELLQNLKQLWWKFFVHLREDVVGLDSSILLNPKVWEASGHVSNFTDPLIDCKNCKTRIRADKFLEDQKGEGFATGLTLEKMNQVIKENNFSCPNCGQRGTFTEARDFNLMFKTSHGASAEDSLDIYLRPETAQGIFLNFKNVVSTTRRKIPFGIAQIGKSFRNEIMARQFVFRTREFEQMEMEFFCEPGTQKEWFSHWVNYCMNWLTEQVGVKKENLRIREHEKEELSFYSEGTSDIEFKYNFGWGELWGIASRTDYDLNQHQKFSGEDLKYQDQVQNKKYVPFVVEPALGVNRLFLAVVTDAYQEEKLPDGEIRTVLRFSPKIAPVKVAVFPLMKKDGLLEKSREIFADLSKLGNIEYDDSGAIGKRYRRQDEIGTPFCITVDYDTLKDDTVTVRERDSMAQERVSVTRLRNWLFERL.

Residues arginine 104 and glutamate 175 each coordinate substrate. ATP is bound by residues 207–209 (RNE), 217–222 (FRTREF), 292–293 (EL), and 336–339 (GVNR). A substrate-binding site is contributed by 222-226 (FEQME). 332–336 (EPALG) serves as a coordination point for substrate.

This sequence belongs to the class-II aminoacyl-tRNA synthetase family. As to quaternary structure, homodimer.

Its subcellular location is the cytoplasm. It carries out the reaction tRNA(Gly) + glycine + ATP = glycyl-tRNA(Gly) + AMP + diphosphate. Functionally, catalyzes the attachment of glycine to tRNA(Gly). In Leptospira borgpetersenii serovar Hardjo-bovis (strain JB197), this protein is Glycine--tRNA ligase.